Reading from the N-terminus, the 415-residue chain is MIDRKLLLQDFDKVALSLKKRNNAMDDELERLREVITHYKKRLIELEGLQAFQNKVSKEFGIKMAQKVDTSDLKKELENNKIKLNELSKSVGELEQQIDLKLSIIPNLVDEKTPLGTNEEDNIEIKKILTPRVFTFKPKEHFELAQQNGWIDFESGVKLAKSRFSVIRGFGAKIYRALIHLMLDFNEKNGFEIIYTPALVNEKMLFGTGQLPKFKEDVFKIENENLYLIPTAEVTLTNLYNDTIISVENLPIKMTAHTPCFRSEAGSAGKDTRGMIRQHQFDKVELVAITHPKESDVMQEHMLESASEILKALELPHRFVQLCSGDLGFSASNTIDIEVWLPGQNCYREISSVSNTRDFQARRAKIRFKENQKNQLAHTLNGSSLAVGRTMVALMENHQQADGSIHIPKALEKYL.

Thr-231–Glu-233 is an L-serine binding site. Arg-262–Glu-264 lines the ATP pocket. Glu-285 lines the L-serine pocket. Glu-349–Ser-352 is an ATP binding site. Residue Ser-383 coordinates L-serine.

It belongs to the class-II aminoacyl-tRNA synthetase family. Type-1 seryl-tRNA synthetase subfamily. Homodimer. The tRNA molecule binds across the dimer.

Its subcellular location is the cytoplasm. It carries out the reaction tRNA(Ser) + L-serine + ATP = L-seryl-tRNA(Ser) + AMP + diphosphate + H(+). The catalysed reaction is tRNA(Sec) + L-serine + ATP = L-seryl-tRNA(Sec) + AMP + diphosphate + H(+). The protein operates within aminoacyl-tRNA biosynthesis; selenocysteinyl-tRNA(Sec) biosynthesis; L-seryl-tRNA(Sec) from L-serine and tRNA(Sec): step 1/1. Its function is as follows. Catalyzes the attachment of serine to tRNA(Ser). Is also able to aminoacylate tRNA(Sec) with serine, to form the misacylated tRNA L-seryl-tRNA(Sec), which will be further converted into selenocysteinyl-tRNA(Sec). In Helicobacter pylori (strain ATCC 700392 / 26695) (Campylobacter pylori), this protein is Serine--tRNA ligase.